The chain runs to 194 residues: ATP synthase subunit 5, mitochondrial (194 aa).

As to quaternary structure, F-type ATP synthases have 2 components, the catalytic core F(1) and the membrane-embedded component F(0), linked together by a central stalk and a peripheral stalk. The central stalk, also called rotor shaft, is often seen as part of F(1). The peripheral stalk is seen as part of F(0). F(0) contains the membrane channel next to the rotor. F-type ATP synthases form dimers but each monomer functions independently in ATP generation. The dimer consists of 18 different polypeptides: ATP1 (subunit alpha, part of F(1), 3 molecules per monomer), ATP2 (subunit beta, part of F(1), 3 molecules per monomer), ATP3 (subunit gamma, part of the central stalk), ATP4 (subunit b, part of the peripheral stalk), ATP5/OSCP (subunit 5/OSCP, part of the peripheral stalk), ATP6 (subunit a, part of the peripheral stalk), ATP7 (subunit d, part of the peripheral stalk), ATP8 (subunit 8, part of the peripheral stalk), OLI1 (subunit c, part of the rotor, 10 molecules per monomer), ATP14 (subunit h, part of the peripheral stalk), ATP15 (subunit epsilon, part of the central stalk), ATP16 (subunit delta, part of the central stalk), ATP17 (subunit f, part of the peripheral stalk), ATP18 (subunit i/j, part of the peripheral stalk). Dimer-specific subunits are ATP19 (subunit k, at interface between monomers), ATP20 (subunit g, at interface between monomers), TIM11 (subunit e, at interface between monomers). Also contains subunit L.

The protein localises to the mitochondrion inner membrane. Functionally, mitochondrial membrane ATP synthase (F(1)F(0) ATP synthase or Complex V) produces ATP from ADP in the presence of a proton gradient across the membrane which is generated by electron transport complexes of the respiratory chain. F-type ATP synthases consist of two structural domains, F(1) - containing the extramembraneous catalytic core, and F(0) - containing the membrane proton channel, linked together by a central stalk and a peripheral stalk. During catalysis, ATP synthesis in the catalytic domain of F(1) is coupled via a rotary mechanism of the central stalk subunits to proton translocation. Part of the complex F(0) domain and the peripheral stalk, which acts as a stator to hold the catalytic alpha/ATP1(3)beta/ATP2(3) subcomplex and subunit a/ATP6 static relative to the rotary elements. In Pichia angusta (Yeast), this protein is ATP synthase subunit 5, mitochondrial.